The following is a 200-amino-acid chain: Small ribosomal subunit protein uS4 (200 aa).

The interval 22-42 (TGKELEKRPYAPGPHGPGQRK) is disordered. An S4 RNA-binding domain is found at 92-155 (TRLDNLVYRL…QNLAVVKESV (64 aa)).

The protein belongs to the universal ribosomal protein uS4 family. As to quaternary structure, part of the 30S ribosomal subunit. Contacts protein S5. The interaction surface between S4 and S5 is involved in control of translational fidelity.

Its function is as follows. One of the primary rRNA binding proteins, it binds directly to 16S rRNA where it nucleates assembly of the body of the 30S subunit. With S5 and S12 plays an important role in translational accuracy. This Bacillus pumilus (strain SAFR-032) protein is Small ribosomal subunit protein uS4.